We begin with the raw amino-acid sequence, 525 residues long: Cytochrome P450 monooxygenase bsc2 (525 aa).

Residues 12–32 form a helical membrane-spanning segment; the sequence is SLFILWLTTLLVSVLATAAYI. 2 N-linked (GlcNAc...) asparagine glycosylation sites follow: asparagine 86 and asparagine 317. Cysteine 456 lines the heme pocket.

This sequence belongs to the cytochrome P450 family. It depends on heme as a cofactor.

It localises to the membrane. It participates in mycotoxin biosynthesis. Its function is as follows. Cytochrome P450 monooxygenase; part of the gene cluster that mediates the biosynthesis of the diterpene glucoside brassicicene C. In the first step of the brassicicene C biosynthesis, the bifunctional diterpene synthase bsc8 that possesses both prenyl transferase and terpene cyclase activity, converts isopentenyl diphosphate and dimethylallyl diphosphate into geranylgeranyl diphosphate (GGDP) that is further converted into fusicocca-2,10(14)-diene, the first precursor for brassicicene C. Fusicocca-2,10(14)-diene is then substrate of cytochrome P450 monooxygenase bsc1 for hydroxylation at the C-8 position. Oxidation at C-16 position to aldehyde is then catalyzed by the cytochrome P450 monooyxygenase bsc7, yielding fusicocca-2,10(14)-diene-8-beta,16-diol. Follows the isomerization of the double bond and reduction of aldehyde to alcohol catalyzed by the short-chain dehydrogenase/reductase bsc3 to yield the diol compound fusicocca-1,10(14)-diene-8 beta,16-diol. The next step is the oxidation at the C-3 position of fusicocca-2,10(14)-diene-8-beta,16-diol catalyzed by the alpha-ketoglutarate dependent dioxygenase bsc9, to produce a triol compound. Methylation of the hydroxy group at position 16 is performed by the methyltransferase bsc6. 16-O-methylation is followed by oxidation at the C-13 position to ketone and an alkyl shift of the methyl group leads to brassicicene C. Although the probable acetyltransferase bsc4 is included in the gene cluster, no acetylation reactions are necessary for brassicicene C biosynthesis. However, the fact that brassicicene E, which is a structurally related compound having an acetoxy group at position 12, was previously isolated from another strain of A.brassicicola suggests that the ATCC 96836 strain might also produce a small amount of brassicicene E. The chain is Cytochrome P450 monooxygenase bsc2 from Alternaria brassicicola (Dark leaf spot agent).